Reading from the N-terminus, the 128-residue chain is NPMYNVVSNADLVDFKNLLDHLEEKMPLEDEVVLPQVASEQNEEAGAVLSALPEVPSWPGEAGPAQREGGALGRGPWDSSDRSAPLKSKLRALLDAPRSLRRSSCFGGRMDRIGAQSSLGCNSFRYRR.

A disordered region spans residues 36–84; it reads QVASEQNEEAGAVLSALPEVPSWPGEAGPAQREGGALGRGPWDSSDRSA. The propeptide occupies 68–78; sequence EGGALGRGPWD. At Ser104 the chain carries Phosphoserine. Cys105 and Cys121 form a disulfide bridge. Residues 122–126 form an important for degradation of atrial natriuretic peptide by IDE region; the sequence is NSFRY.

This sequence belongs to the natriuretic peptide family. As to quaternary structure, homodimer; disulfide-linked antiparallel dimer. Post-translationally, the precursor molecule is proteolytically cleaved by CORIN at Arg-98 to produce atrial natriuretic peptide. Undergoes further proteolytic cleavage by unknown proteases to give rise to long-acting natriuretic peptide, vessel dilator and kaliuretic peptide. Additional processing gives rise to the auriculin and atriopeptin peptides. In the kidneys, alternative processing by an unknown protease results in the peptide urodilatin. Cleavage by MME initiates degradation of the factor and thereby regulates its activity. Degraded by IDE (in vitro). During IDE degradation, the resulting products can temporarily stimulate NPR2 to produce cGMP, before the fragments are completely degraded and inactivated by IDE (in vitro). In terms of processing, degraded by IDE. Post-translationally, phosphorylation on Ser-104 decreases vasorelaxant activity.

The protein resides in the secreted. Its subcellular location is the perikaryon. The protein localises to the cell projection. Functionally, hormone that plays a key role in mediating cardio-renal homeostasis, and is involved in vascular remodeling and regulating energy metabolism. Acts by specifically binding and stimulating NPR1 to produce cGMP, which in turn activates effector proteins, such as PRKG1, that drive various biological responses. Regulates vasodilation, natriuresis, diuresis and aldosterone synthesis and is therefore essential for regulating blood pressure, controlling the extracellular fluid volume and maintaining the fluid-electrolyte balance. Also involved in inhibiting cardiac remodeling and cardiac hypertrophy by inducing cardiomyocyte apoptosis and attenuating the growth of cardiomyocytes and fibroblasts. Plays a role in female pregnancy by promoting trophoblast invasion and spiral artery remodeling in uterus, and thus prevents pregnancy-induced hypertension. In adipose tissue, acts in various cGMP- and PKG-dependent pathways to regulate lipid metabolism and energy homeostasis. This includes up-regulating lipid metabolism and mitochondrial oxygen utilization by activating the AMP-activated protein kinase (AMPK), and increasing energy expenditure by acting via MAPK11 to promote the UCP1-dependent thermogenesis of brown adipose tissue. Binds the clearance receptor NPR3 which removes the hormone from circulation. May have a role in cardio-renal homeostasis through regulation of natriuresis, diuresis, vasodilation, and inhibiting aldosterone synthesis. In vitro, promotes the production of cGMP and induces vasodilation. May promote natriuresis, at least in part, by enhancing prostaglandin E2 synthesis resulting in the inhibition of renal Na+-K+-ATPase. However reports on the involvement of this peptide in mammal blood volume and blood pressure homeostasis are conflicting; according to a report, in vivo it is not sufficient to activate cGMP and does not inhibit collecting duct transport nor effect diuresis and natriuresis. Appears to bind to specific receptors that are distinct from the receptors bound by atrial natriuretic peptide and vessel dilator. Possibly enhances protein excretion in urine by decreasing proximal tubular protein reabsorption. In terms of biological role, may have a role in cardio-renal homeostasis through regulation of natriuresis, diuresis, and vasodilation. In vitro, promotes the production of cGMP and induces vasodilation. May promote natriuresis, at least in part, by enhancing prostaglandin E2 synthesis resulting in the inhibition of renal Na+-K+-ATPase. However reports on the involvement of this peptide in mammal blood volume and blood pressure homeostasis are conflicting; according to a report it is not sufficient to activate cGMP and does not inhibit collecting duct transport nor effect diuresis and natriuresis. Appears to bind to specific receptors that are distinct from the receptors bound by the atrial natriuretic and long-acting natriuretic peptides. Possibly functions in protein excretion in urine by maintaining the integrity of the proximal tubules and enhancing protein excretion by decreasing proximal tubular protein reabsorption. Its function is as follows. May have a role in cardio-renal homeostasis through regulation of diuresis and inhibiting aldosterone synthesis. In vitro, promotes the production of cGMP and induces vasodilation. May promote natriuresis, at least in part, by enhancing prostaglandin E2 synthesis resulting in the inhibition of renal Na+-K+-ATPase. May have a role in potassium excretion but not sodium excretion (natriuresis). Possibly enhances protein excretion in urine by decreasing proximal tubular protein reabsorption. Functionally, hormone produced in the kidneys that appears to be important for maintaining cardio-renal homeostasis. Mediates vasodilation, natriuresis and diuresis primarily in the renal system, in order to maintain the extracellular fluid volume and control the fluid-electrolyte balance. Specifically binds and stimulates cGMP production by renal transmembrane receptors, likely NPR1. Urodilatin not ANP, may be the natriuretic peptide responsible for the regulation of sodium and water homeostasis in the kidney. May have a role in cardio-renal homeostasis through regulation of natriuresis and vasodilation. In vivo promotes natriuresis and in vitro, vasodilates renal artery strips. In terms of biological role, may have a role in cardio-renal homeostasis through regulation of regulation of natriuresis and vasodilation. In vivo promotes natriuresis. In vitro, vasodilates intestinal smooth muscle but not smooth muscle strips. Its function is as follows. May have a role in cardio-renal homeostasis through regulation of natriuresis and vasodilation. In vivo promotes natriuresis. In vitro, selectively vasodilates intestinal and vascular smooth muscle strips. Functionally, may have a role in cardio-renal homeostasis through regulation of natriuresis and vasodilation. In vivo promotes natriuresis. In vitro, selectively vasodilates intestinal smooth muscle but not vascular smooth muscle strips. The polypeptide is Natriuretic peptides A (NPPA) (Cavia porcellus (Guinea pig)).